The primary structure comprises 61 residues: Small ribosomal subunit protein uS14B (61 aa).

Residues C24, C27, C40, and C43 each contribute to the Zn(2+) site.

It belongs to the universal ribosomal protein uS14 family. Zinc-binding uS14 subfamily. In terms of assembly, part of the 30S ribosomal subunit. Contacts proteins S3 and S10. Zn(2+) is required as a cofactor.

Its function is as follows. Binds 16S rRNA, required for the assembly of 30S particles and may also be responsible for determining the conformation of the 16S rRNA at the A site. The sequence is that of Small ribosomal subunit protein uS14B from Shouchella clausii (strain KSM-K16) (Alkalihalobacillus clausii).